The primary structure comprises 707 residues: Lipase maturation factor 2 (707 aa).

The next 10 membrane-spanning stretches (helical) occupy residues L10–I30, L78–L98, V102–L122, Y123–L143, D165–V185, L227–I247, V259–L279, A310–G330, L364–L384, and A399–V419. Residues N489 and N616 are each glycosylated (N-linked (GlcNAc...) asparagine). Residues A637–A657 form a helical membrane-spanning segment. Residues P665–K707 form a disordered region. The span at Q679–A691 shows a compositional bias: polar residues.

This sequence belongs to the lipase maturation factor family.

The protein localises to the endoplasmic reticulum membrane. Involved in the maturation of specific proteins in the endoplasmic reticulum. May be required for maturation and transport of active lipoprotein lipase (LPL) through the secretory pathway. This is Lipase maturation factor 2 (LMF2) from Homo sapiens (Human).